Reading from the N-terminus, the 361-residue chain is AT-hook motif nuclear-localized protein 12 (361 aa).

2 disordered regions span residues 29-143 (SQVA…GRKQ) and 286-361 (NNKT…LTRG). A compositionally biased stretch (polar residues) spans 48–59 (SNPNIHHPQANN). A compositionally biased stretch (pro residues) spans 85 to 95 (QPPPPPPPPEE). The Bipartite nuclear localization signal signature appears at 99-107 (KRKRGRPRK). DNA-binding regions (a.T hook) lie at residues 99–111 (KRKR…YGEP) and 130–142 (KRAR…TGRK). Residues 154–297 (TSAGLAFAPH…KTIRQEKEPN (144 aa)) form the PPC domain. Residues 306–322 (ETTPGSAAEPAASAGQQ) are compositionally biased toward low complexity.

In terms of assembly, homodimer. Interacts with AHL27, AHL29 and ATAF2/NAC081.

It localises to the nucleus. Transcription factor that specifically binds AT-rich DNA sequences related to the nuclear matrix attachment regions (MARs). This Arabidopsis thaliana (Mouse-ear cress) protein is AT-hook motif nuclear-localized protein 12.